A 306-amino-acid polypeptide reads, in one-letter code: Elongation factor Ts (306 aa).

The involved in Mg(2+) ion dislocation from EF-Tu stretch occupies residues 80 to 83; that stretch reads TDFV.

The protein belongs to the EF-Ts family.

It localises to the cytoplasm. Associates with the EF-Tu.GDP complex and induces the exchange of GDP to GTP. It remains bound to the aminoacyl-tRNA.EF-Tu.GTP complex up to the GTP hydrolysis stage on the ribosome. The chain is Elongation factor Ts from Clostridium kluyveri (strain NBRC 12016).